The primary structure comprises 244 residues: uncharacterized protein (244 aa).

Basic and acidic residues-rich tracts occupy residues 1 to 10 (MNDPFARMET) and 100 to 127 (GTRG…HGEE). 3 disordered regions span residues 1-79 (MNDP…GEEL), 100-130 (GTRG…EPNY), and 219-244 (TGAS…EIKL).

This is an uncharacterized protein from Homo sapiens (Human).